A 342-amino-acid polypeptide reads, in one-letter code: RNA 3'-terminal phosphate cyclase (342 aa).

ATP-binding positions include Q103 and Y283–Q287. The active-site Tele-AMP-histidine intermediate is the H308.

The protein belongs to the RNA 3'-terminal cyclase family. Type 1 subfamily.

It is found in the cytoplasm. It carries out the reaction a 3'-end 3'-phospho-ribonucleotide-RNA + ATP = a 3'-end 2',3'-cyclophospho-ribonucleotide-RNA + AMP + diphosphate. Its function is as follows. Catalyzes the conversion of 3'-phosphate to a 2',3'-cyclic phosphodiester at the end of RNA. The mechanism of action of the enzyme occurs in 3 steps: (A) adenylation of the enzyme by ATP; (B) transfer of adenylate to an RNA-N3'P to produce RNA-N3'PP5'A; (C) and attack of the adjacent 2'-hydroxyl on the 3'-phosphorus in the diester linkage to produce the cyclic end product. The biological role of this enzyme is unknown but it is likely to function in some aspects of cellular RNA processing. The protein is RNA 3'-terminal phosphate cyclase of Shigella dysenteriae serotype 1 (strain Sd197).